Here is a 175-residue protein sequence, read N- to C-terminus: Ribosome maturation factor RimM (175 aa).

Residues 93-167 form the PRC barrel domain; the sequence is DDEFYYSDLI…YIIITLPEVI (75 aa).

This sequence belongs to the RimM family. In terms of assembly, binds ribosomal protein uS19.

The protein localises to the cytoplasm. Its function is as follows. An accessory protein needed during the final step in the assembly of 30S ribosomal subunit, possibly for assembly of the head region. Essential for efficient processing of 16S rRNA. May be needed both before and after RbfA during the maturation of 16S rRNA. It has affinity for free ribosomal 30S subunits but not for 70S ribosomes. In Ehrlichia chaffeensis (strain ATCC CRL-10679 / Arkansas), this protein is Ribosome maturation factor RimM.